The following is a 664-amino-acid chain: E3 ubiquitin-protein ligase RNF139 (664 aa).

Residue alanine 2 is modified to N-acetylalanine. A run of 12 helical transmembrane segments spans residues 51 to 71 (IVLQ…VLIL), 85 to 105 (AFLL…HIDF), 125 to 145 (SLWM…VTLL), 154 to 174 (LIIL…PLHI), 178 to 198 (LLFT…AVKL), 293 to 313 (GMSA…LAFI), 323 to 343 (LGFV…LSGL), 356 to 376 (MCLL…PVLM), 390 to 410 (FPVL…SYVL), 420 to 440 (LFAV…SLTV), 469 to 489 (SIIE…TMMF), and 495 to 512 (IRAF…YLQA). An RING-type; atypical zinc finger spans residues 547–586 (CAICYHEFTTSARITPCNHYFHALCLRKWLYIQDTCPMCH). The tract at residues 601-664 (VSNNNGFIPP…AAEEFNDDTD (64 aa)) is disordered. Residues 616–628 (EAVREAAAESDRE) show a composition bias toward basic and acidic residues. Over residues 629–639 (LNEDDSTDCDD) the composition is skewed to acidic residues. Residue serine 634 is modified to Phosphoserine. 2 positions are modified to phosphothreonine: threonine 635 and threonine 663.

As to quaternary structure, interacts with MHC class I and HM13. Interacts with VHL. Component of SCAP-SREBP complex composed of SREBF2, SCAP and RNF139; the complex hampers the interaction between SCAP and SEC24B, thereby reducing SREBF2 proteolytic processing. Interacts with SREBF2 (via C-terminal domain). Interacts with SCAP; the interaction inhibits the interaction of SCAP with SEC24B and hampering the ER to Golgi transport of the SCAP-SREBP complex. Interacts with SEC24B. Interacts with INSIG1 and INSIG2. Interacts with EIF3F and EIF3H; the interaction leads to protein translation inhibitions in a ubiquitination-dependent manner. Interacts with XBP1 isoform 1; the interaction induces ubiquitination and degradation of XBP1 isoform 1. Interacts with AUP1, AMFR and UBE2G2; interaction with AUP1 facilitates interaction of RNF139 with ubiquitin-conjugating enzyme UBE2G2 and ubiquitin ligase AMFR/gp78, leading to sterol-induced ubiquitination of HMGCR and its subsequent proteasomal degradation. In terms of processing, autoubiquitinated. Ubiquitination is induced by sterol and leads to ist degradation via the ubiquitin-proteasome pathway. In terms of tissue distribution, highly expressed in testis, placenta and adrenal gland. Moderate expression in heart, brain, liver, skeletal muscle and pancreas, and low expression in lung and kidney.

Its subcellular location is the endoplasmic reticulum membrane. The catalysed reaction is S-ubiquitinyl-[E2 ubiquitin-conjugating enzyme]-L-cysteine + [acceptor protein]-L-lysine = [E2 ubiquitin-conjugating enzyme]-L-cysteine + N(6)-ubiquitinyl-[acceptor protein]-L-lysine.. The protein operates within protein modification; protein ubiquitination. E3-ubiquitin ligase; acts as a negative regulator of cell proliferation through mechanisms involving G2/M arrest and cell death. Required for MHC class I ubiquitination in cells expressing the cytomegalovirus protein US2 before dislocation from the endoplasmic reticulum (ER). Affects SREBP processing by hindering the SREBP-SCAP complex translocation from the ER to the Golgi, thereby reducing SREBF2 target gene expression. Involved in the sterol-accelerated degradation of HMGCR. This is achieved through binding of RNF139 to INSIG1 and/or INSIG2 at the ER membrane. In addition, interaction of RNF139 with AUP1 facilitates interaction of RNF139 with ubiquitin-conjugating enzyme UBE2G2 and ubiquitin ligase AMFR, leading to ubiquitination of HMGCR. The ubiquitinated HMGCR is then released from the ER into the cytosol for subsequent destruction. Required for INSIG1 ubiquitination. May be required for EIF3 complex ubiquitination. This chain is E3 ubiquitin-protein ligase RNF139, found in Homo sapiens (Human).